The chain runs to 715 residues: DNA mismatch repair protein MLH3 (715 aa).

This sequence belongs to the DNA mismatch repair MutL/HexB family. As to quaternary structure, heterodimer of MLH1 and MLH3, called MutLbeta, which is involved in correction of a specific subset of IDLs when associated with MutSbeta. Forms a ternary complex with a SGS1-TOP3 heterodimer during meiosis.

The protein resides in the nucleus. Involved in DNA mismatch repair (MMR), correcting insertion-deletion loops (IDLs) resulting from DNA replication, DNA damage or from recombination events between non-identical sequences during meiosis. Component of the MutLbeta heterodimer, which probably forms a ternary complex with the MutSbeta heterodimer that initially recognizes the DNA mismatches. This complex is thought to be responsible for directing the downstream MMR events, including strand discrimination, excision, and resynthesis. Plays a major role in promoting meiotic crossing-over and is involved in maintaining the genetic stability of simple sequence repeats by correction of frameshift intermediates. The protein is DNA mismatch repair protein MLH3 (MLH3) of Saccharomyces cerevisiae (strain ATCC 204508 / S288c) (Baker's yeast).